A 335-amino-acid polypeptide reads, in one-letter code: 4-hydroxythreonine-4-phosphate dehydrogenase (335 aa).

Thr132 provides a ligand contact to substrate. Residues His163, His208, and His263 each contribute to the a divalent metal cation site. Residues Lys271, Asn280, and Arg289 each contribute to the substrate site.

The protein belongs to the PdxA family. Homodimer. Zn(2+) serves as cofactor. The cofactor is Mg(2+). Co(2+) is required as a cofactor.

The protein resides in the cytoplasm. It catalyses the reaction 4-(phosphooxy)-L-threonine + NAD(+) = 3-amino-2-oxopropyl phosphate + CO2 + NADH. It functions in the pathway cofactor biosynthesis; pyridoxine 5'-phosphate biosynthesis; pyridoxine 5'-phosphate from D-erythrose 4-phosphate: step 4/5. Functionally, catalyzes the NAD(P)-dependent oxidation of 4-(phosphooxy)-L-threonine (HTP) into 2-amino-3-oxo-4-(phosphooxy)butyric acid which spontaneously decarboxylates to form 3-amino-2-oxopropyl phosphate (AHAP). The polypeptide is 4-hydroxythreonine-4-phosphate dehydrogenase (Zymomonas mobilis subsp. mobilis (strain ATCC 31821 / ZM4 / CP4)).